The chain runs to 684 residues: Frizzled-8 (684 aa).

Residues 1–27 (MEWGYLLEVTSLLAALAVLQRSSGAAA) form the signal peptide. Over 28-271 (ASAKELACQE…NPFFSQDERA (244 aa)) the chain is Extracellular. The FZ domain maps to 30–151 (AKELACQEIT…GNPDTLCMDY (122 aa)). Intrachain disulfides connect cysteine 35–cysteine 96, cysteine 43–cysteine 89, cysteine 80–cysteine 118, cysteine 107–cysteine 148, and cysteine 111–cysteine 135. N-linked (GlcNAc...) asparagine glycosylation occurs at asparagine 49. 71–78 (QFWPLVEI) is a hexadecanoate binding site. A wnt-binding region spans residues 95–100 (ICLEDY). The segment at 147 to 152 (LCMDYN) is wnt-binding. A glycan (N-linked (GlcNAc...) asparagine) is linked at asparagine 152. The segment at 155-222 (DLTTAAPSPP…KARPPGGGAA (68 aa)) is disordered. Residues 161–175 (PSPPRRLPPPQPGEQ) are compositionally biased toward pro residues. Low complexity-rich tracts occupy residues 176-186 (PPSGSGHSRPP) and 199-222 (GSGDTAAAPPSRGGKARPPGGGAA). The chain crosses the membrane as a helical span at residues 272–292 (FTVFWIGLWSVLCFVSTFATV). The Cytoplasmic segment spans residues 293–308 (STFLIDMERFKYPERP). A helical membrane pass occupies residues 309-329 (IIFLSACYLFVSVGYLVRLVA). Over 330–393 (GHEKVACSGG…RYETTGPALC (64 aa)) the chain is Extracellular. A helical transmembrane segment spans residues 394-414 (TVVFLLVYFFGMASSIWWVIL). Over 415–436 (SLTWFLAAGMKWGNEAIAGYSQ) the chain is Cytoplasmic. Residues 437-457 (YFHLAAWLVPSVKSIAVLALS) traverse the membrane as a helical segment. At 458 to 480 (SVDGDPVAGICYVGNQSLDNLRG) the chain is on the extracellular side. N-linked (GlcNAc...) asparagine glycosylation occurs at asparagine 472. A helical membrane pass occupies residues 481–501 (FVLAPLVIYLFIGTMFLLAGF). Residues 502–529 (VSLFRIRSVIKQQGGPTKTHKLEKLMIR) are Cytoplasmic-facing. The helical transmembrane segment at 530 to 550 (LGLFTVLYTVPAAVVVACLFY) threads the bilayer. Residues 551–581 (EQHNRPRWEATHNCPCLRDLQPDQARRPDYA) are Extracellular-facing. A helical transmembrane segment spans residues 582 to 602 (VFMLKYFMCLVVGITSGVWVW). At 603 to 684 (SGKTLESWRA…YPKQMPLSQV (82 aa)) the chain is on the cytoplasmic side. The Lys-Thr-X-X-X-Trp motif, mediates interaction with the PDZ domain of Dvl family members motif lies at 605-610 (KTLESW). Positions 630-654 (AGGSGPGGGGPGPGGGGGHGGGGGS) are enriched in gly residues. The segment at 630–655 (AGGSGPGGGGPGPGGGGGHGGGGGSL) is disordered. Positions 682-684 (SQV) match the PDZ-binding motif.

This sequence belongs to the G-protein coupled receptor Fz/Smo family. Component of a Wnt-signaling complex that contains a WNT protein, a FZD protein and LRP5 or LRP6. Interacts directly with LRP5 or LRP6; the interaction is promoted by Wnt-binding and signaling and inhibited by DKK1. Interacts (via the PDZ-binding motif) with GPOC (via its PDZ domain). Interacts with RSPO1 and RSPO3. Interacts with glypican GPC3. Ubiquitinated by ZNRF3, leading to its degradation by the proteasome.

It localises to the membrane. The protein resides in the golgi apparatus. Its subcellular location is the cell membrane. Its function is as follows. Receptor for Wnt proteins. Component of the Wnt-Fzd-LRP5-LRP6 complex that triggers beta-catenin signaling through inducing aggregation of receptor-ligand complexes into ribosome-sized signalosomes. The beta-catenin canonical signaling pathway leads to the activation of disheveled proteins, inhibition of GSK-3 kinase, nuclear accumulation of beta-catenin and activation of Wnt target genes. A second signaling pathway involving PKC and calcium fluxes has been seen for some family members, but it is not yet clear if it represents a distinct pathway or if it can be integrated in the canonical pathway, as PKC seems to be required for Wnt-mediated inactivation of GSK-3 kinase. Both pathways seem to involve interactions with G-proteins. May be involved in transduction and intercellular transmission of polarity information during tissue morphogenesis and/or in differentiated tissues. Coreceptor along with RYK of Wnt proteins, such as WNT1. This chain is Frizzled-8 (Fzd8), found in Rattus norvegicus (Rat).